A 115-amino-acid chain; its full sequence is Large ribosomal subunit protein bL19 (115 aa).

Belongs to the bacterial ribosomal protein bL19 family.

This protein is located at the 30S-50S ribosomal subunit interface and may play a role in the structure and function of the aminoacyl-tRNA binding site. This Tropheryma whipplei (strain TW08/27) (Whipple's bacillus) protein is Large ribosomal subunit protein bL19.